The chain runs to 574 residues: Proline--tRNA ligase (574 aa).

This sequence belongs to the class-II aminoacyl-tRNA synthetase family. ProS type 1 subfamily. As to quaternary structure, homodimer.

The protein localises to the cytoplasm. The catalysed reaction is tRNA(Pro) + L-proline + ATP = L-prolyl-tRNA(Pro) + AMP + diphosphate. Its function is as follows. Catalyzes the attachment of proline to tRNA(Pro) in a two-step reaction: proline is first activated by ATP to form Pro-AMP and then transferred to the acceptor end of tRNA(Pro). As ProRS can inadvertently accommodate and process non-cognate amino acids such as alanine and cysteine, to avoid such errors it has two additional distinct editing activities against alanine. One activity is designated as 'pretransfer' editing and involves the tRNA(Pro)-independent hydrolysis of activated Ala-AMP. The other activity is designated 'posttransfer' editing and involves deacylation of mischarged Ala-tRNA(Pro). The misacylated Cys-tRNA(Pro) is not edited by ProRS. The polypeptide is Proline--tRNA ligase (Pseudoalteromonas translucida (strain TAC 125)).